The sequence spans 341 residues: Protein BIG GRAIN 1-like C (341 aa).

Disordered regions lie at residues 28 to 61 and 76 to 138; these read DGLQ…LTTL and SSTT…SDDD. Over residues 52 to 61 the composition is skewed to basic and acidic residues; the sequence is NKKDDKLTTL. Residues 76-92 show a composition bias toward low complexity; the sequence is SSTTTTNSSDSSSFSSS. Basic and acidic residues predominate over residues 105-138; it reads KLAEQGKRSGDERQRTKRTVMDNDSRLFSKSDDD.

Belongs to the BIG GRAIN 1 (BG1) plant protein family.

The protein localises to the cell membrane. In terms of biological role, involved in auxin transport. Regulator of the auxin signaling pathway. The sequence is that of Protein BIG GRAIN 1-like C from Arabidopsis thaliana (Mouse-ear cress).